A 182-amino-acid chain; its full sequence is Ribosome maturation factor RimM (182 aa).

One can recognise a PRC barrel domain in the interval Glu103 to Phe182.

Belongs to the RimM family. In terms of assembly, binds ribosomal protein uS19.

The protein resides in the cytoplasm. In terms of biological role, an accessory protein needed during the final step in the assembly of 30S ribosomal subunit, possibly for assembly of the head region. Essential for efficient processing of 16S rRNA. May be needed both before and after RbfA during the maturation of 16S rRNA. It has affinity for free ribosomal 30S subunits but not for 70S ribosomes. The sequence is that of Ribosome maturation factor RimM from Yersinia enterocolitica serotype O:8 / biotype 1B (strain NCTC 13174 / 8081).